The chain runs to 1000 residues: Lysine-specific histone demethylase 1 (1000 aa).

A disordered region spans residues 104–123 (RRPAGRRGRPALNTSNSLER). A coiled-coil region spans residues 107-137 (AGRRGRPALNTSNSLERNGTRYVSAEAPISV). Positions 153-249 (CYESAIASNL…YGCIYIISSL (97 aa)) constitute an SWIRM domain. FAD contacts are provided by residues 260-302 (VAII…IYEA), Glu-301, and 328-329 (LA). Residues 279–950 (LFAQYEQDFL…RCESQPIPED (672 aa)) form a demethylase activity region. A coiled-coil region spans residues 434–529 (IGWYISIEAF…ADMLNSLAST (96 aa)). Residues 780–800 (TYGTKRNAQQALGKEGERENK) form a disordered region. The HMG box DNA-binding region spans 841 to 921 (SRPSANPYLL…NYSTRLEEYQ (81 aa)). Position 908–909 (908–909 (AR)) interacts with FAD. Residues 959 to 972 (EQEDEHLHPEKEGM) show a composition bias toward basic and acidic residues. Positions 959–1000 (EQEDEHLHPEKEGMSVENSDDDYHDDLDYEDSISEVFPDNFS) are disordered. Residues 976–991 (NSDDDYHDDLDYEDSI) show a composition bias toward acidic residues.

Belongs to the flavin monoamine oxidase family. Component of the SWM histone demethylase complex composed of at least lsd1, lsd2, phf1 and phf2. Interacts directly with lsd2. Requires FAD as cofactor.

It localises to the nucleus. Catalytic component of the SWM histone demethylase complex that specifically demethylates H3K9me2, a specific tag for epigenetic transcriptional activation, thereby acting as a corepressor. Acts by oxidizing the substrate by FAD to generate the corresponding imine that is subsequently hydrolyzed. Has a role in regulating heterochromatin propagation and euchromatic transcription. Also has a gene activating role. This Schizosaccharomyces pombe (strain 972 / ATCC 24843) (Fission yeast) protein is Lysine-specific histone demethylase 1 (lsd1).